A 539-amino-acid polypeptide reads, in one-letter code: MSKNNFRDDFEKNRQSINSDDQFEDNTNEFDENSNESNDFDNQSDQQFPPRNAQRRQRRRNQATNKNRKFGNQNSDSNANGSLDDRHDEDSFNELQHNQQENHLDNEPIHKDDKLSSEKDFNNDASRRNNRHEASNRKHDKDYDNGSLNDDDRHRRNHEEGIDERQDNRNHKDQQNKKSRHGKDAAIAGGAGVAGAAGAKAAKDKRKKDEHHDSKYNEHKDDRDLNNDNQFDQNRKHDKDLHDDHRDAKDNHSKEEPKKGNKGKKAAVGAGAAGAAGAAGVAAAKHKKDHKNNNHKDNHSHNRDHQDDHRNHKHEDGNDGFQAHNGKKKRGLAGILLPLIALLLILAALAIFIGMYLNNDKKDSNQADNKTEQTANKDNNKDSKDKASNDSDKDKASSDKDKDKATNDDDSNDKATTDNDSSNNSSDDNSSSSDNSTSSNSSDNSSSSDNNGNNSNSDNNNGNSQATSNNSSQSNSNNNQSNSSNSGQQTHVVSGNENLYRIAIQYYGEGTVENVNKLKQANGLSSNNISNGQKLIIPQ.

Basic and acidic residues predominate over residues 1-14; sequence MSKNNFRDDFEKNR. A disordered region spans residues 1–324; the sequence is MSKNNFRDDF…EDGNDGFQAH (324 aa). Over residues 21-34 the composition is skewed to acidic residues; the sequence is DQFEDNTNEFDENS. Low complexity predominate over residues 35–52; it reads NESNDFDNQSDQQFPPRN. A compositionally biased stretch (basic residues) spans 53 to 69; that stretch reads AQRRQRRRNQATNKNRK. Positions 70–81 are enriched in polar residues; sequence FGNQNSDSNANG. Composition is skewed to basic and acidic residues over residues 100–176, 210–226, and 233–259; these read QENH…DQQN, EHHD…RDLN, and QNRK…EPKK. Low complexity predominate over residues 266 to 283; sequence AAVGAGAAGAAGAAGVAA. A compositionally biased stretch (basic and acidic residues) spans 291-317; that stretch reads KNNNHKDNHSHNRDHQDDHRNHKHEDG. The helical transmembrane segment at 335-355 threads the bilayer; the sequence is ILLPLIALLLILAALAIFIGM. 2 stretches are compositionally biased toward basic and acidic residues: residues 362–371 and 378–417; these read KDSNQADNKT and DNNK…KATT. The disordered stretch occupies residues 362 to 491; it reads KDSNQADNKT…NSSNSGQQTH (130 aa). The span at 418-490 shows a compositional bias: low complexity; sequence DNDSSNNSSD…SNSSNSGQQT (73 aa). In terms of domain architecture, LysM spans 489 to 537; that stretch reads QTHVVSGNENLYRIAIQYYGEGTVENVNKLKQANGLSSNNISNGQKLII.

It localises to the cell membrane. This chain is Probable elastin-binding protein EbpS (ebpS), found in Staphylococcus haemolyticus (strain JCSC1435).